The following is a 539-amino-acid chain: Protoporphyrinogen oxidase (539 aa).

FAD contacts are provided by residues 18 to 23, 43 to 44, Trp-51, 70 to 73, Val-300, and 521 to 523; these read GGGVSG, ES, GPRT, and PGV.

The protein belongs to the protoporphyrinogen/coproporphyrinogen oxidase family. Protoporphyrinogen oxidase subfamily. Requires FAD as cofactor.

Its subcellular location is the mitochondrion inner membrane. The catalysed reaction is protoporphyrinogen IX + 3 O2 = protoporphyrin IX + 3 H2O2. It functions in the pathway porphyrin-containing compound metabolism; protoporphyrin-IX biosynthesis; protoporphyrin-IX from protoporphyrinogen-IX: step 1/1. In terms of biological role, catalyzes the 6-electron oxidation of protoporphyrinogen-IX to form protoporphyrin-IX. The chain is Protoporphyrinogen oxidase from Saccharomyces cerevisiae (strain ATCC 204508 / S288c) (Baker's yeast).